Reading from the N-terminus, the 226-residue chain is Protein-L-isoaspartate(D-aspartate) O-methyltransferase (226 aa).

Residues 57–60, histidine 65, serine 89, 115–116, 147–148, and threonine 222 contribute to the S-adenosyl-L-homocysteine site; these read VTIS, EH, and DG. The active site involves serine 60.

The protein belongs to the methyltransferase superfamily. L-isoaspartyl/D-aspartyl protein methyltransferase family. Monomer.

It localises to the cytoplasm. Its subcellular location is the cytosol. The catalysed reaction is [protein]-L-isoaspartate + S-adenosyl-L-methionine = [protein]-L-isoaspartate alpha-methyl ester + S-adenosyl-L-homocysteine. Initiates the repair of damaged proteins by catalyzing methyl esterification of L-isoaspartyl and D-aspartyl residues produced by spontaneous isomerization and racemization of L-aspartyl and L-asparaginyl residues in aging peptides and proteins. The chain is Protein-L-isoaspartate(D-aspartate) O-methyltransferase (Pcmt) from Drosophila melanogaster (Fruit fly).